A 156-amino-acid polypeptide reads, in one-letter code: 6,7-dimethyl-8-ribityllumazine synthase (156 aa).

Residues phenylalanine 23, 57 to 59 (AFE), and 81 to 83 (TVI) each bind 5-amino-6-(D-ribitylamino)uracil. Residue 86–87 (ST) coordinates (2S)-2-hydroxy-3-oxobutyl phosphate. Catalysis depends on histidine 89, which acts as the Proton donor. Phenylalanine 114 lines the 5-amino-6-(D-ribitylamino)uracil pocket. Arginine 128 is a binding site for (2S)-2-hydroxy-3-oxobutyl phosphate.

It belongs to the DMRL synthase family. As to quaternary structure, forms an icosahedral capsid composed of 60 subunits, arranged as a dodecamer of pentamers.

The catalysed reaction is (2S)-2-hydroxy-3-oxobutyl phosphate + 5-amino-6-(D-ribitylamino)uracil = 6,7-dimethyl-8-(1-D-ribityl)lumazine + phosphate + 2 H2O + H(+). The protein operates within cofactor biosynthesis; riboflavin biosynthesis; riboflavin from 2-hydroxy-3-oxobutyl phosphate and 5-amino-6-(D-ribitylamino)uracil: step 1/2. Its function is as follows. Catalyzes the formation of 6,7-dimethyl-8-ribityllumazine by condensation of 5-amino-6-(D-ribitylamino)uracil with 3,4-dihydroxy-2-butanone 4-phosphate. This is the penultimate step in the biosynthesis of riboflavin. The sequence is that of 6,7-dimethyl-8-ribityllumazine synthase from Shouchella clausii (strain KSM-K16) (Alkalihalobacillus clausii).